We begin with the raw amino-acid sequence, 381 residues long: MTLRYLTAGESHGPALVAIAEGFPAGLPVDFEAVDRDLRRRQKGYGRGGRMKIETDAAQFLAGLRGGVTTGAPIALAVWNKDHENWKDLVSPYARGGRKFTQVRPGHADLAGALKYGLDDARDVLERASARSTAVIVALGALAKALLSSQGVEVCSRVVAIGPRDIRPDAPPTPAQRDAIEASDLHVDDEALAAEWRALIDAEKARGGSIGGAFDVYATGLPIGLGSHVHPDRRLDARLAGALCGVQAIRAVEIGDGTQVGRPGYEFHDAIHHDPARGFWRETNRAGGLEGGMTDGMPLRVRAYMKPIPTMLHPLATVDLATRAATQARYERSDVCAVPAAAVVGEAVVAWELANALLEKFGGDTVEDVRRAVEAYAARIR.

Positions 41 and 47 each coordinate NADP(+). Residues 127 to 129, 247 to 248, Gly-291, 306 to 310, and Arg-332 contribute to the FMN site; these read RAS, QA, and KPIPT.

Belongs to the chorismate synthase family. Homotetramer. Requires FMNH2 as cofactor.

It catalyses the reaction 5-O-(1-carboxyvinyl)-3-phosphoshikimate = chorismate + phosphate. It functions in the pathway metabolic intermediate biosynthesis; chorismate biosynthesis; chorismate from D-erythrose 4-phosphate and phosphoenolpyruvate: step 7/7. In terms of biological role, catalyzes the anti-1,4-elimination of the C-3 phosphate and the C-6 proR hydrogen from 5-enolpyruvylshikimate-3-phosphate (EPSP) to yield chorismate, which is the branch point compound that serves as the starting substrate for the three terminal pathways of aromatic amino acid biosynthesis. This reaction introduces a second double bond into the aromatic ring system. This chain is Chorismate synthase, found in Anaeromyxobacter dehalogenans (strain 2CP-C).